Here is a 164-residue protein sequence, read N- to C-terminus: MDMVASDNVYAPLYAPFFGFAGCALAMILSCLGAAIGTAKSGIGIAGIGTFKPELIMKSLIPVVMSGILAIYGLVVAVLIAGNLSPTEEYTLFNGFMHLSCGLCVGFACLSSGYAIGIVGDVGVRKYMHQPRLFVGIVLILIFSEVLGLYGMIIALILNTKGSE.

At 1–16 (MDMVASDNVYAPLYAP) the chain is on the lumenal side. The helical transmembrane segment at 17–37 (FFGFAGCALAMILSCLGAAIG) threads the bilayer. The Cytoplasmic portion of the chain corresponds to 38–59 (TAKSGIGIAGIGTFKPELIMKS). The helical transmembrane segment at 60–80 (LIPVVMSGILAIYGLVVAVLI) threads the bilayer. At 81-98 (AGNLSPTEEYTLFNGFMH) the chain is on the lumenal side. A helical membrane pass occupies residues 99 to 119 (LSCGLCVGFACLSSGYAIGIV). The Cytoplasmic segment spans residues 120–136 (GDVGVRKYMHQPRLFVG). Residues 137 to 157 (IVLILIFSEVLGLYGMIIALI) form a helical membrane-spanning segment. The Lumenal segment spans residues 158 to 164 (LNTKGSE).

This sequence belongs to the V-ATPase proteolipid subunit family. V-ATPase is a heteromultimeric enzyme composed of a peripheral catalytic V1 complex (components A to H) attached to an integral membrane V0 proton pore complex (components: a, c, c', c'', d, e, f and VOA1). The decameric c-ring forms the proton-conducting pore, and is composed of eight proteolipid subunits c, one subunit c' and one subunit c''.

The protein localises to the vacuole membrane. Functionally, proton-conducting pore forming subunit of the V0 complex of vacuolar(H+)-ATPase (V-ATPase), a multisubunit enzyme composed of a peripheral complex (V1) that hydrolyzes ATP and a membrane integral complex (V0) that translocates protons. V-ATPase is responsible for acidifying and maintaining the pH of intracellular compartments. This is V-type proton ATPase subunit c' (VMA11) from Candida glabrata (strain ATCC 2001 / BCRC 20586 / JCM 3761 / NBRC 0622 / NRRL Y-65 / CBS 138) (Yeast).